The sequence spans 462 residues: Nitrogenase molybdenum-iron protein beta chain (462 aa).

Cys-21, Cys-46, Cys-104, and Ser-145 together coordinate [8Fe-7S] cluster.

The protein belongs to the NifD/NifK/NifE/NifN family. In terms of assembly, tetramer of two alpha and two beta chains. Forms complex with the iron protein (nitrogenase component 2). The cofactor is [8Fe-7S] cluster.

The catalysed reaction is N2 + 8 reduced [2Fe-2S]-[ferredoxin] + 16 ATP + 16 H2O = H2 + 8 oxidized [2Fe-2S]-[ferredoxin] + 2 NH4(+) + 16 ADP + 16 phosphate + 6 H(+). Its function is as follows. This molybdenum-iron protein is part of the nitrogenase complex that catalyzes the key enzymatic reactions in nitrogen fixation. The chain is Nitrogenase molybdenum-iron protein beta chain (nifK) from Methanococcus maripaludis (Methanococcus deltae).